Here is a 428-residue protein sequence, read N- to C-terminus: Small ribosomal subunit protein uS2m (428 aa).

A disordered region spans residues 30–50 (FLSQDNFTAPPPPPTNSKKQA).

Belongs to the universal ribosomal protein uS2 family. In terms of assembly, component of the mitochondrial small ribosomal subunit (mt-SSU). Mature N.crassa 74S mitochondrial ribosomes consist of a small (37S) and a large (54S) subunit. The 37S small subunit contains a 16S ribosomal RNA (16S mt-rRNA) and 32 different proteins. The 54S large subunit contains a 23S rRNA (23S mt-rRNA) and 42 different proteins.

Its subcellular location is the mitochondrion. In terms of biological role, component of the mitochondrial ribosome (mitoribosome), a dedicated translation machinery responsible for the synthesis of mitochondrial genome-encoded proteins, including at least some of the essential transmembrane subunits of the mitochondrial respiratory chain. The mitoribosomes are attached to the mitochondrial inner membrane and translation products are cotranslationally integrated into the membrane. This Neurospora crassa (strain ATCC 24698 / 74-OR23-1A / CBS 708.71 / DSM 1257 / FGSC 987) protein is Small ribosomal subunit protein uS2m (mrp4).